A 62-amino-acid polypeptide reads, in one-letter code: Large ribosomal subunit protein bL33 (62 aa).

It belongs to the bacterial ribosomal protein bL33 family.

The polypeptide is Large ribosomal subunit protein bL33 (Azobacteroides pseudotrichonymphae genomovar. CFP2).